We begin with the raw amino-acid sequence, 198 residues long: tRNA (pseudouridine(54)-N(1))-methyltransferase (198 aa).

Residues Leu130, Gly153, 176-181 (LSPLEL), and Cys186 each bind S-adenosyl-L-methionine.

It belongs to the methyltransferase superfamily. TrmY family. In terms of assembly, homodimer.

Its subcellular location is the cytoplasm. It catalyses the reaction pseudouridine(54) in tRNA + S-adenosyl-L-methionine = N(1)-methylpseudouridine(54) in tRNA + S-adenosyl-L-homocysteine + H(+). Its function is as follows. Specifically catalyzes the N1-methylation of pseudouridine at position 54 (Psi54) in tRNAs. This is tRNA (pseudouridine(54)-N(1))-methyltransferase from Methanococcus maripaludis (strain C5 / ATCC BAA-1333).